Consider the following 475-residue polypeptide: tRNA-dihydrouridine(16/17) synthase [NAD(P)(+)]-like (475 aa).

FMN-binding positions include 23-25 (PMV) and glutamine 79. Cysteine 108 (proton donor) is an active-site residue. Residues lysine 147, histidine 175, 208 to 210 (NGN), and 232 to 233 (AE) each bind FMN. The interval 343 to 388 (GPREGSKENSGGRSKRALEEEEGSMEGLSKNKLKKQLRNPHKTFDP) is disordered. Basic residues predominate over residues 373–383 (NKLKKQLRNPH).

The protein belongs to the Dus family. Dus1 subfamily. Requires FMN as cofactor.

It is found in the cytoplasm. It localises to the nucleus. It catalyses the reaction 5,6-dihydrouridine(16) in tRNA + NADP(+) = uridine(16) in tRNA + NADPH + H(+). The catalysed reaction is 5,6-dihydrouridine(16) in tRNA + NAD(+) = uridine(16) in tRNA + NADH + H(+). The enzyme catalyses 5,6-dihydrouridine(17) in tRNA + NAD(+) = uridine(17) in tRNA + NADH + H(+). It carries out the reaction 5,6-dihydrouridine(17) in tRNA + NADP(+) = uridine(17) in tRNA + NADPH + H(+). Functionally, catalyzes the synthesis of dihydrouridine, a modified base found in the D-loop of most tRNAs. Specifically modifies U16 and U17 in cytoplasmic tRNAs. Affects the level of some mature tRNA and thereby the total cellular translation. The chain is tRNA-dihydrouridine(16/17) synthase [NAD(P)(+)]-like (Dus1l) from Mus musculus (Mouse).